We begin with the raw amino-acid sequence, 391 residues long: Histamine H4 receptor (391 aa).

Topologically, residues 1 to 19 (MSESNGTDVLPLTAQVPLA) are extracellular. N5 carries an N-linked (GlcNAc...) asparagine glycan. The helical transmembrane segment at 20–40 (FLMSLLAFAITIGNAVVILAF) threads the bilayer. Residues 41 to 52 (VADRNLRHRSNY) lie on the Cytoplasmic side of the membrane. A helical membrane pass occupies residues 53-73 (FFLNLAISDFFVGVISIPLYI). Topologically, residues 74 to 87 (PHTLFNWNFGSGIC) are extracellular. C87 and C166 form a disulfide bridge. A helical membrane pass occupies residues 88–108 (MFWLITDYLLCTASVYSIVLI). Over 109–131 (SYDRYQSVSNAVRYRAQHTGILK) the chain is Cytoplasmic. The helical transmembrane segment at 132 to 152 (IVAQMVAVWILAFLVNGPMIL) threads the bilayer. At 153–174 (ASDSWKNSTNTEECEPGFVTEW) the chain is on the extracellular side. N159 carries an N-linked (GlcNAc...) asparagine glycan. The helical transmembrane segment at 175–195 (YILAITAFLEFLLPVSLVVYF) threads the bilayer. Over 196 to 306 (SVQIYWSLWK…LLRGRKLARS (111 aa)) the chain is Cytoplasmic. A helical transmembrane segment spans residues 307 to 327 (LAVLLSAFAICWAPYCLFTIV). Topologically, residues 328 to 343 (LSTYRRGERPKSIWYS) are extracellular. Residues 344 to 364 (IAFWLQWFNSLINPFLYPLCH) traverse the membrane as a helical segment. The Cytoplasmic portion of the chain corresponds to 365 to 391 (RRFQKAFWKILCVTKQPAPSQTQSVSS).

It belongs to the G-protein coupled receptor 1 family. Interacts with TSPAN4.

The protein localises to the cell membrane. In terms of biological role, the H4 subclass of histamine receptors could mediate the histamine signals in peripheral tissues. Displays a significant level of constitutive activity (spontaneous activity in the absence of agonist). This Rattus norvegicus (Rat) protein is Histamine H4 receptor (Hrh4).